Here is a 590-residue protein sequence, read N- to C-terminus: Putative ferric-chelate reductase 1 (590 aa).

Residues 2 to 22 (NPLGLFLIYLYTCALTPVSGY) form a helical membrane-spanning segment. The 168-residue stretch at 12–179 (YTCALTPVSG…APKIPSSTIP (168 aa)) folds into the Reelin domain. Residues 217–330 (ECFFLSFRKD…RSYFIFLADG (114 aa)) enclose the DOMON domain. One can recognise a Cytochrome b561 domain in the interval 334–533 (DGLLYRHHRQ…VFVDLLLEAH (200 aa)). A helical membrane pass occupies residues 371 to 391 (LHGAMMFIAWMTTVSIGVIIA). Residues His372 and His413 each contribute to the heme b site. The next 2 membrane-spanning stretches (helical) occupy residues 416-436 (LMITTVFLTVVAFVLPFIYRG) and 445-465 (HPHLGVTVMILTVLQPVLAVF). Position 445 (His445) interacts with heme b. Residue Asn478 is glycosylated (N-linked (GlcNAc...) asparagine). His481 lines the heme b pocket. Transmembrane regions (helical) follow at residues 482-502 (WATGTAARIIAVAAMFLGMDL), 517-537 (IGFVLWHVFVDLLLEAHGFCL), and 567-587 (IVMTVYICGNLAFLITFLAAI).

This sequence belongs to the FRRS1 family. Heme b serves as cofactor.

The protein resides in the membrane. Putative ferric-chelate reductases reduce Fe(3+) to Fe(2+) before its transport from the endosome to the cytoplasm. This is Putative ferric-chelate reductase 1 (frrs1) from Xenopus laevis (African clawed frog).